Here is a 117-residue protein sequence, read N- to C-terminus: Hemerythrin subunit beta (117 aa).

Fe cation is bound by residues histidine 24, histidine 53, glutamate 57, histidine 72, histidine 76, histidine 105, and aspartate 110.

Belongs to the hemerythrin family. Octamer composed of two types of chains: alpha and beta.

Hemerythrin is a respiratory protein in blood cells of certain marine worms. The oxygen-binding site in each chain contains two iron atoms. This chain is Hemerythrin subunit beta, found in Lingula anatina (Brachiopod).